Reading from the N-terminus, the 205-residue chain is Protein N-terminal glutamine amidohydrolase (205 aa).

Active-site residues include Cys28, His81, and Asp97.

Belongs to the NTAQ1 family. In terms of assembly, monomer.

The protein resides in the cytoplasm. The protein localises to the cytosol. It localises to the nucleus. It carries out the reaction N-terminal L-glutaminyl-[protein] + H2O = N-terminal L-glutamyl-[protein] + NH4(+). Mediates the side-chain deamidation of N-terminal glutamine residues to glutamate, an important step in N-end rule pathway of protein degradation. Conversion of the resulting N-terminal glutamine to glutamate renders the protein susceptible to arginylation, polyubiquitination and degradation as specified by the N-end rule. Does not act on substrates with internal or C-terminal glutamine and does not act on non-glutamine residues in any position. Does not deaminate acetylated N-terminal glutamine. With the exception of proline, all tested second-position residues on substrate peptides do not greatly influence the activity. In contrast, a proline at position 2, virtually abolishes deamidation of N-terminal glutamine. The polypeptide is Protein N-terminal glutamine amidohydrolase (Homo sapiens (Human)).